We begin with the raw amino-acid sequence, 111 residues long: Large ribosomal subunit protein uL22 (111 aa).

It belongs to the universal ribosomal protein uL22 family. Part of the 50S ribosomal subunit.

Its function is as follows. This protein binds specifically to 23S rRNA; its binding is stimulated by other ribosomal proteins, e.g. L4, L17, and L20. It is important during the early stages of 50S assembly. It makes multiple contacts with different domains of the 23S rRNA in the assembled 50S subunit and ribosome. The globular domain of the protein is located near the polypeptide exit tunnel on the outside of the subunit, while an extended beta-hairpin is found that lines the wall of the exit tunnel in the center of the 70S ribosome. The polypeptide is Large ribosomal subunit protein uL22 (Pelobacter propionicus (strain DSM 2379 / NBRC 103807 / OttBd1)).